A 435-amino-acid chain; its full sequence is Succinate--CoA ligase [ADP-forming] subunit beta, mitochondrial (435 aa).

A mitochondrion-targeting transit peptide spans 1 to 20 (MIGRISQPLLNTSQKFMAPA). Positions 32–259 (MKILQNYEIK…SNAEFRQAKL (228 aa)) constitute an ATP-grasp domain. Residues Lys-69 and 76 to 78 (GRG) contribute to the ATP site. Mg(2+) contacts are provided by Asn-229 and Asp-243. Substrate is bound by residues Asn-294 and 352 to 354 (GIM).

Belongs to the succinate/malate CoA ligase beta subunit family. ATP-specific subunit beta subfamily. Heterodimer of an alpha and a beta subunit. The beta subunit determines specificity for ATP. It depends on Mg(2+) as a cofactor.

The protein resides in the mitochondrion. The catalysed reaction is succinate + ATP + CoA = succinyl-CoA + ADP + phosphate. It participates in carbohydrate metabolism; tricarboxylic acid cycle; succinate from succinyl-CoA (ligase route): step 1/1. Functionally, ATP-specific succinyl-CoA synthetase functions in the citric acid cycle (TCA), coupling the hydrolysis of succinyl-CoA to the synthesis of ATP and thus represents the only step of substrate-level phosphorylation in the TCA. The beta subunit provides nucleotide specificity of the enzyme and binds the substrate succinate, while the binding sites for coenzyme A and phosphate are found in the alpha subunit. This is Succinate--CoA ligase [ADP-forming] subunit beta, mitochondrial from Caenorhabditis elegans.